A 266-amino-acid chain; its full sequence is Glioma pathogenesis-related protein 1 (266 aa).

The N-terminal stretch at Met1–Thr21 is a signal peptide. The region spanning Val38–Tyr175 is the SCP domain. A helical transmembrane segment spans residues Tyr233–Val255.

It belongs to the CRISP family. According to PubMed:8973356, it is ubiquitously expressed with high levels in lung and kidney and low levels in heart and liver. Highly expressed in cell lines derived from nervous system tumors arising from glia, low or absent in non-glial-derived nervous system tumor cell lines. Also found in fetal kidney. According to PubMed:7607567 it is expressed only in brain tumor glioblastoma multiforme/astrocytoma and not in other nervous system tumors or normal fetal or adult tissues.

Its subcellular location is the membrane. This chain is Glioma pathogenesis-related protein 1 (GLIPR1), found in Homo sapiens (Human).